The chain runs to 113 residues: Large ribosomal subunit protein uL22 (113 aa).

It belongs to the universal ribosomal protein uL22 family. As to quaternary structure, part of the 50S ribosomal subunit.

This protein binds specifically to 23S rRNA; its binding is stimulated by other ribosomal proteins, e.g. L4, L17, and L20. It is important during the early stages of 50S assembly. It makes multiple contacts with different domains of the 23S rRNA in the assembled 50S subunit and ribosome. Functionally, the globular domain of the protein is located near the polypeptide exit tunnel on the outside of the subunit, while an extended beta-hairpin is found that lines the wall of the exit tunnel in the center of the 70S ribosome. This chain is Large ribosomal subunit protein uL22, found in Syntrophomonas wolfei subsp. wolfei (strain DSM 2245B / Goettingen).